A 169-amino-acid chain; its full sequence is Probable RNA-binding protein EIF1AD (169 aa).

The region spanning 14-89 (VLGDYVQPTE…VKAEIAFILY (76 aa)) is the S1-like domain. Residues 115–169 (AKEKESSGIQSTEAQAKPQGEDSETDDDSGLFVNTNHVHYEDSEEESESEEDEEN) form a disordered region. The span at 156–169 (DSEEESESEEDEEN) shows a compositional bias: acidic residues.

The protein belongs to the EIF1AD family.

The protein resides in the nucleus. May play a role into cellular response to oxidative stress. May decrease cell proliferation. This chain is Probable RNA-binding protein EIF1AD (eif1ad), found in Xenopus laevis (African clawed frog).